The primary structure comprises 744 residues: MQDQNNSNTPKKKKLSFWGIIGIVASILVLLVIAYIIYYYVSQTTVLKRDFSFLNRAIQEAAKSATDDIYFKSIVDNPYNNSLVATMQLPENVWAALNGMTSTSTRIRVVTFEVHATTSMKNILYNEIISSIGGATPSFSRGLAMILGYSENGVTKAGEFLSTGAPTESIWSTVLRYGTNIIFLLLFAASFIFMFMSFRSQRGTGGLLDNKSVAQRIYSNKKFSDIAGNEEVKEEVKELVDYLKNPKKYSTAGARIPKGILLGGPPGTGKTLIAKATAGEANVPFFFISASNFVEMFVGLGAKRVRDMFEEARKTAPAIIFIDELDAVGRSRGAGIGGGNDEREQTLNQLLVEMDGIKENSGILIMAATNRSDVLDPALLRPGRFDRTITVGLPDIKEREAILKLHAKGKRIANNVSFMMIARRTPGFSGAQLENVINEASLLSVRENTNVITLPQLDEAIDRVMAGPAKKSRTISEKENAAVAYHEAGHAVVGIKIKGGNKVQKITIIPRGHAGGYNLMMPEEEKYNRSKAELIAIITSFMGGRVAEAIIYGKDNVSTGASDDIAKATRIARKMVTEWGLSELGPIKYEEDTDNPFLGRDYMKNASFSAQVGQEIDQEIRKIILAAEANAHKIISENRELLELIKDALIINETIVAEEIEYIAKNMKLPPAITKTKEDLHEEYSDQDFDNLFNEVSGKKIISEDKYVDDLNKEIKQLEEKIEANKSSSKSTVNEEKSKDEKNN.

Residues 1–16 (MQDQNNSNTPKKKKLS) are Cytoplasmic-facing. The helical transmembrane segment at 17–37 (FWGIIGIVASILVLLVIAYII) threads the bilayer. Residues 38–177 (YYYVSQTTVL…ESIWSTVLRY (140 aa)) lie on the Extracellular side of the membrane. A helical membrane pass occupies residues 178–198 (GTNIIFLLLFAASFIFMFMSF). At 199 to 744 (RSQRGTGGLL…EEKSKDEKNN (546 aa)) the chain is on the cytoplasmic side. An ATP-binding site is contributed by 264–271 (GPPGTGKT). Position 486 (H486) interacts with Zn(2+). The active site involves E487. 2 residues coordinate Zn(2+): H490 and D564. A disordered region spans residues 722-744 (IEANKSSSKSTVNEEKSKDEKNN). A compositionally biased stretch (basic and acidic residues) spans 733–744 (VNEEKSKDEKNN).

It in the central section; belongs to the AAA ATPase family. This sequence in the C-terminal section; belongs to the peptidase M41 family. Homohexamer. Zn(2+) is required as a cofactor.

The protein localises to the cell membrane. Functionally, acts as a processive, ATP-dependent zinc metallopeptidase for both cytoplasmic and membrane proteins. Plays a role in the quality control of integral membrane proteins. The sequence is that of ATP-dependent zinc metalloprotease FtsH from Metamycoplasma arthritidis (strain 158L3-1) (Mycoplasma arthritidis).